The sequence spans 277 residues: Caspase-3 (277 aa).

Methionine 1 carries the N-acetylmethionine modification. 2 propeptides span residues 1–9 (MDNNETSVD) and 10–28 (SKSI…KSMD). Lysine 11 carries the post-translational modification N6-acetyllysine. At serine 26 the chain carries Phosphoserine. Residues histidine 121 and cysteine 163 contribute to the active site. Cysteine 163 is modified (S-nitrosocysteine; in inhibited form).

The protein belongs to the peptidase C14A family. As to quaternary structure, heterotetramer that consists of two anti-parallel arranged heterodimers, each one formed by a 17 kDa (p17) and a 12 kDa (p12) subunit. Interacts with BIRC6/bruce. Post-translationally, cleavage by granzyme B, caspase-6, caspase-8 and caspase-10 generates the two active subunits. Additional processing of the propeptides is likely due to the autocatalytic activity of the activated protease. Active heterodimers between the small subunit of caspase-7 protease and the large subunit of caspase-3 also occur and vice versa. In terms of processing, S-nitrosylated on its catalytic site cysteine in unstimulated cell lines and denitrosylated upon activation of the Fas apoptotic pathway, associated with an increase in intracellular caspase activity. Fas therefore activates caspase-3 not only by inducing the cleavage of the caspase zymogen to its active subunits, but also by stimulating the denitrosylation of its active site thiol. Ubiquitinated by BIRC6; this activity is inhibited by DIABLO/SMAC. Expressed in heart, brain, liver, and muscle but not in kidney or testis.

It is found in the cytoplasm. The enzyme catalyses Strict requirement for an Asp residue at positions P1 and P4. It has a preferred cleavage sequence of Asp-Xaa-Xaa-Asp-|- with a hydrophobic amino-acid residue at P2 and a hydrophilic amino-acid residue at P3, although Val or Ala are also accepted at this position.. Inhibited by BIRC6; following inhibition of BIRC6-caspase binding by DIABLO/SMAC, BIRC6 is subjected to caspase cleavage, leading to an increase in active caspases. Its function is as follows. Involved in the activation cascade of caspases responsible for apoptosis execution. At the onset of apoptosis, it proteolytically cleaves poly(ADP-ribose) polymerase PARP1 at a '216-Asp-|-Gly-217' bond. Cleaves and activates sterol regulatory element binding proteins (SREBPs) between the basic helix-loop-helix leucine zipper domain and the membrane attachment domain. Cleaves and activates caspase-6, -7 and -9 (CASP6, CASP7 and CASP9, respectively). Cleaves and inactivates interleukin-18 (IL18). Triggers cell adhesion in sympathetic neurons through RET cleavage. Cleaves IL-1 beta between an Asp and an Ala, releasing the mature cytokine which is involved in a variety of inflammatory processes. Cleaves and inhibits serine/threonine-protein kinase AKT1 in response to oxidative stress. Acts as an inhibitor of type I interferon production during virus-induced apoptosis by mediating cleavage of antiviral proteins CGAS, IRF3 and MAVS, thereby preventing cytokine overproduction. Also involved in pyroptosis by mediating cleavage and activation of gasdermin-E (GSDME). Cleaves XRCC4 and phospholipid scramblase proteins XKR4, XKR8 and XKR9, leading to promote phosphatidylserine exposure on apoptotic cell surface. Cleaves BIRC6 following inhibition of BIRC6-caspase binding by DIABLO/SMAC. In Rattus norvegicus (Rat), this protein is Caspase-3 (Casp3).